Reading from the N-terminus, the 309-residue chain is HPr kinase/phosphorylase (309 aa).

Active-site residues include His-138 and Lys-159. 153 to 160 is a binding site for ATP; it reads GDSGIGKS. Residue Ser-160 coordinates Mg(2+). Asp-177 serves as the catalytic Proton acceptor; for phosphorylation activity. Proton donor; for dephosphorylation activity. Residues 201-210 are important for the catalytic mechanism of both phosphorylation and dephosphorylation; it reads LEIRGVGIID. Residue Glu-202 participates in Mg(2+) binding. Residue Arg-243 is part of the active site. An important for the catalytic mechanism of dephosphorylation region spans residues 264–269; it reads PVKTGR.

Belongs to the HPrK/P family. Homohexamer. Mg(2+) serves as cofactor.

The catalysed reaction is [HPr protein]-L-serine + ATP = [HPr protein]-O-phospho-L-serine + ADP + H(+). It carries out the reaction [HPr protein]-O-phospho-L-serine + phosphate + H(+) = [HPr protein]-L-serine + diphosphate. In terms of biological role, catalyzes the ATP- as well as the pyrophosphate-dependent phosphorylation of a specific serine residue in HPr, a phosphocarrier protein of the phosphoenolpyruvate-dependent sugar phosphotransferase system (PTS). HprK/P also catalyzes the pyrophosphate-producing, inorganic phosphate-dependent dephosphorylation (phosphorolysis) of seryl-phosphorylated HPr (P-Ser-HPr). The two antagonistic activities of HprK/P are regulated by several intracellular metabolites, which change their concentration in response to the absence or presence of rapidly metabolisable carbon sources (glucose, fructose, etc.) in the growth medium. Therefore, by controlling the phosphorylation state of HPr, HPrK/P is a sensor enzyme that plays a major role in the regulation of carbon metabolism and sugar transport: it mediates carbon catabolite repression (CCR), and regulates PTS-catalyzed carbohydrate uptake and inducer exclusion. The polypeptide is HPr kinase/phosphorylase (Streptococcus thermophilus (strain ATCC BAA-250 / LMG 18311)).